A 1033-amino-acid polypeptide reads, in one-letter code: Isoleucine--tRNA ligase 2 (1033 aa).

Positions 47–57 (PTANGLPHVGH) match the 'HIGH' region motif. Residues 590–594 (KMSKS) carry the 'KMSKS' region motif. Residue K593 coordinates ATP.

Belongs to the class-I aminoacyl-tRNA synthetase family. IleS type 2 subfamily. Monomer. It depends on Zn(2+) as a cofactor.

The protein resides in the cytoplasm. It catalyses the reaction tRNA(Ile) + L-isoleucine + ATP = L-isoleucyl-tRNA(Ile) + AMP + diphosphate. Catalyzes the attachment of isoleucine to tRNA(Ile). As IleRS can inadvertently accommodate and process structurally similar amino acids such as valine, to avoid such errors it has two additional distinct tRNA(Ile)-dependent editing activities. One activity is designated as 'pretransfer' editing and involves the hydrolysis of activated Val-AMP. The other activity is designated 'posttransfer' editing and involves deacylation of mischarged Val-tRNA(Ile). In Bacillus anthracis, this protein is Isoleucine--tRNA ligase 2.